We begin with the raw amino-acid sequence, 225 residues long: 2-C-methyl-D-erythritol 4-phosphate cytidylyltransferase (225 aa).

Belongs to the IspD/TarI cytidylyltransferase family. IspD subfamily.

The enzyme catalyses 2-C-methyl-D-erythritol 4-phosphate + CTP + H(+) = 4-CDP-2-C-methyl-D-erythritol + diphosphate. It functions in the pathway isoprenoid biosynthesis; isopentenyl diphosphate biosynthesis via DXP pathway; isopentenyl diphosphate from 1-deoxy-D-xylulose 5-phosphate: step 2/6. Catalyzes the formation of 4-diphosphocytidyl-2-C-methyl-D-erythritol from CTP and 2-C-methyl-D-erythritol 4-phosphate (MEP). This is 2-C-methyl-D-erythritol 4-phosphate cytidylyltransferase from Clostridium perfringens (strain SM101 / Type A).